The chain runs to 200 residues: Holliday junction branch migration complex subunit RuvA (200 aa).

Residues 1 to 63 form a domain I region; the sequence is MIALVQGRVA…EDSLTLFGFA (63 aa). The segment at 64-138 is domain II; that stretch reads DADERDVFEL…DRLGPAQGAA (75 aa). The tract at residues 138–142 is flexible linker; it reads APAAP. The interval 143–200 is domain III; sequence VAVDDGADVVDALVGLGWPVRQAQDAVRGVLEDADGTAPDAAGLLRAALRSLAGDARG.

Belongs to the RuvA family. As to quaternary structure, homotetramer. Forms an RuvA(8)-RuvB(12)-Holliday junction (HJ) complex. HJ DNA is sandwiched between 2 RuvA tetramers; dsDNA enters through RuvA and exits via RuvB. An RuvB hexamer assembles on each DNA strand where it exits the tetramer. Each RuvB hexamer is contacted by two RuvA subunits (via domain III) on 2 adjacent RuvB subunits; this complex drives branch migration. In the full resolvosome a probable DNA-RuvA(4)-RuvB(12)-RuvC(2) complex forms which resolves the HJ.

It localises to the cytoplasm. Its function is as follows. The RuvA-RuvB-RuvC complex processes Holliday junction (HJ) DNA during genetic recombination and DNA repair, while the RuvA-RuvB complex plays an important role in the rescue of blocked DNA replication forks via replication fork reversal (RFR). RuvA specifically binds to HJ cruciform DNA, conferring on it an open structure. The RuvB hexamer acts as an ATP-dependent pump, pulling dsDNA into and through the RuvAB complex. HJ branch migration allows RuvC to scan DNA until it finds its consensus sequence, where it cleaves and resolves the cruciform DNA. The protein is Holliday junction branch migration complex subunit RuvA of Beutenbergia cavernae (strain ATCC BAA-8 / DSM 12333 / CCUG 43141 / JCM 11478 / NBRC 16432 / NCIMB 13614 / HKI 0122).